The chain runs to 378 residues: Cytochrome b (378 aa).

A run of 4 helical transmembrane segments spans residues 33–53 (FGSLLGLCLVAQILTGLFLAM), 77–98 (WLIRNLHANGASFFFLCLYLHI), 113–133 (WNTGILLLLLIMVTAFVGYVL), and 178–198 (FFAFHFFIPFIATAVVALHFL). 2 residues coordinate heme b: His83 and His97. 2 residues coordinate heme b: His182 and His196. Residue His201 participates in a ubiquinone binding. The next 4 helical transmembrane spans lie at 226–246 (YKDLLGFLLLLAPLTALAVFS), 288–308 (LGGVLALLASILVLAVVPFLH), 320–340 (WSQLCLFTLVVTVLILTWIGG), and 347–367 (LTTVGQIASLLYFTIILFLMP).

The protein belongs to the cytochrome b family. In terms of assembly, the cytochrome bc1 complex contains 3 respiratory subunits (MT-CYB, CYC1 and UQCRFS1), 2 core proteins (UQCRC1 and UQCRC2) and probably 6 low-molecular weight proteins. Heme b serves as cofactor.

Its subcellular location is the mitochondrion inner membrane. Component of the ubiquinol-cytochrome c reductase complex (complex III or cytochrome b-c1 complex) that is part of the mitochondrial respiratory chain. The b-c1 complex mediates electron transfer from ubiquinol to cytochrome c. Contributes to the generation of a proton gradient across the mitochondrial membrane that is then used for ATP synthesis. This is Cytochrome b (mt-cyb) from Indostomus paradoxus (Armoured stickleback).